We begin with the raw amino-acid sequence, 185 residues long: MSEQALSTFDRAREALDKKTRYVQDFPEKGVLFEDLTPVLGDAESFVAVVDAMAEAAEKLNAEIIGGLDARGFLLGSAVAYKLGLGVLAIRKKGKLPPPVVTQEYELEYGTAALELPSEGIDIAGKNIVLIDDVLATGGTLGAARKLIESCDGHVSGYVLAIEVPGLGGRDNLGDRPVIVVRDPQ.

This sequence belongs to the purine/pyrimidine phosphoribosyltransferase family. As to quaternary structure, homodimer.

It localises to the cytoplasm. The catalysed reaction is AMP + diphosphate = 5-phospho-alpha-D-ribose 1-diphosphate + adenine. It participates in purine metabolism; AMP biosynthesis via salvage pathway; AMP from adenine: step 1/1. Catalyzes a salvage reaction resulting in the formation of AMP, that is energically less costly than de novo synthesis. The polypeptide is Adenine phosphoribosyltransferase (Corynebacterium glutamicum (strain ATCC 13032 / DSM 20300 / JCM 1318 / BCRC 11384 / CCUG 27702 / LMG 3730 / NBRC 12168 / NCIMB 10025 / NRRL B-2784 / 534)).